A 434-amino-acid polypeptide reads, in one-letter code: Methylenetetrahydrofolate--tRNA-(uracil-5-)-methyltransferase TrmFO (434 aa).

Residue 10 to 15 (GAGLAG) coordinates FAD.

The protein belongs to the MnmG family. TrmFO subfamily. The cofactor is FAD.

The protein localises to the cytoplasm. It carries out the reaction uridine(54) in tRNA + (6R)-5,10-methylene-5,6,7,8-tetrahydrofolate + NADH + H(+) = 5-methyluridine(54) in tRNA + (6S)-5,6,7,8-tetrahydrofolate + NAD(+). The enzyme catalyses uridine(54) in tRNA + (6R)-5,10-methylene-5,6,7,8-tetrahydrofolate + NADPH + H(+) = 5-methyluridine(54) in tRNA + (6S)-5,6,7,8-tetrahydrofolate + NADP(+). Functionally, catalyzes the folate-dependent formation of 5-methyl-uridine at position 54 (M-5-U54) in all tRNAs. This is Methylenetetrahydrofolate--tRNA-(uracil-5-)-methyltransferase TrmFO from Bacillus anthracis (strain A0248).